Consider the following 345-residue polypeptide: D-alanine--D-alanine ligase (345 aa).

The region spanning Lys-137 to Glu-342 is the ATP-grasp domain. Glu-169–Glu-224 is an ATP binding site. 3 residues coordinate Mg(2+): Asp-295, Glu-309, and Asn-311.

This sequence belongs to the D-alanine--D-alanine ligase family. The cofactor is Mg(2+). Mn(2+) serves as cofactor.

It is found in the cytoplasm. It carries out the reaction 2 D-alanine + ATP = D-alanyl-D-alanine + ADP + phosphate + H(+). Its pathway is cell wall biogenesis; peptidoglycan biosynthesis. Functionally, cell wall formation. This chain is D-alanine--D-alanine ligase, found in Synechococcus sp. (strain RCC307).